Here is a 103-residue protein sequence, read N- to C-terminus: Urease subunit beta (103 aa).

Belongs to the urease beta subunit family. Heterotrimer of UreA (gamma), UreB (beta) and UreC (alpha) subunits. Three heterotrimers associate to form the active enzyme.

The protein resides in the cytoplasm. The enzyme catalyses urea + 2 H2O + H(+) = hydrogencarbonate + 2 NH4(+). It functions in the pathway nitrogen metabolism; urea degradation; CO(2) and NH(3) from urea (urease route): step 1/1. The chain is Urease subunit beta from Streptomyces avermitilis (strain ATCC 31267 / DSM 46492 / JCM 5070 / NBRC 14893 / NCIMB 12804 / NRRL 8165 / MA-4680).